A 169-amino-acid chain; its full sequence is Ribosome maturation factor RimM (169 aa).

Residues 92-166 (NKEYYWNDIF…IVIDLTNLNN (75 aa)) enclose the PRC barrel domain.

It belongs to the RimM family. Binds ribosomal protein uS19.

It localises to the cytoplasm. In terms of biological role, an accessory protein needed during the final step in the assembly of 30S ribosomal subunit, possibly for assembly of the head region. Essential for efficient processing of 16S rRNA. May be needed both before and after RbfA during the maturation of 16S rRNA. It has affinity for free ribosomal 30S subunits but not for 70S ribosomes. The chain is Ribosome maturation factor RimM from Buchnera aphidicola subsp. Cinara cedri (strain Cc).